The following is a 201-amino-acid chain: Peptidyl-tRNA hydrolase (201 aa).

Tyr14 serves as a coordination point for tRNA. Catalysis depends on His19, which acts as the Proton acceptor. Tyr64, Asn66, and Asn112 together coordinate tRNA.

This sequence belongs to the PTH family. As to quaternary structure, monomer.

The protein resides in the cytoplasm. It catalyses the reaction an N-acyl-L-alpha-aminoacyl-tRNA + H2O = an N-acyl-L-amino acid + a tRNA + H(+). Its function is as follows. Hydrolyzes ribosome-free peptidyl-tRNAs (with 1 or more amino acids incorporated), which drop off the ribosome during protein synthesis, or as a result of ribosome stalling. Catalyzes the release of premature peptidyl moieties from peptidyl-tRNA molecules trapped in stalled 50S ribosomal subunits, and thus maintains levels of free tRNAs and 50S ribosomes. The chain is Peptidyl-tRNA hydrolase from Rhodopseudomonas palustris (strain BisB18).